A 502-amino-acid chain; its full sequence is Probable cytosol aminopeptidase (502 aa).

Mn(2+) contacts are provided by Lys-265 and Asp-270. Lys-277 is a catalytic residue. Asp-288, Asp-347, and Glu-349 together coordinate Mn(2+). Residue Arg-351 is part of the active site.

This sequence belongs to the peptidase M17 family. Mn(2+) is required as a cofactor.

Its subcellular location is the cytoplasm. It carries out the reaction Release of an N-terminal amino acid, Xaa-|-Yaa-, in which Xaa is preferably Leu, but may be other amino acids including Pro although not Arg or Lys, and Yaa may be Pro. Amino acid amides and methyl esters are also readily hydrolyzed, but rates on arylamides are exceedingly low.. It catalyses the reaction Release of an N-terminal amino acid, preferentially leucine, but not glutamic or aspartic acids.. Functionally, presumably involved in the processing and regular turnover of intracellular proteins. Catalyzes the removal of unsubstituted N-terminal amino acids from various peptides. This Rickettsia bellii (strain OSU 85-389) protein is Probable cytosol aminopeptidase.